We begin with the raw amino-acid sequence, 631 residues long: tRNA uridine 5-carboxymethylaminomethyl modification enzyme MnmG (631 aa).

15-20 (GAGHAG) is an FAD binding site. The disordered stretch occupies residues 214–233 (YSKTEEEPGDKEPRHFSFTS). An NAD(+)-binding site is contributed by 276 to 290 (GPRYCPSIETKVVRF).

This sequence belongs to the MnmG family. Homodimer. Heterotetramer of two MnmE and two MnmG subunits. The cofactor is FAD.

The protein localises to the cytoplasm. NAD-binding protein involved in the addition of a carboxymethylaminomethyl (cmnm) group at the wobble position (U34) of certain tRNAs, forming tRNA-cmnm(5)s(2)U34. The sequence is that of tRNA uridine 5-carboxymethylaminomethyl modification enzyme MnmG from Lactobacillus delbrueckii subsp. bulgaricus (strain ATCC 11842 / DSM 20081 / BCRC 10696 / JCM 1002 / NBRC 13953 / NCIMB 11778 / NCTC 12712 / WDCM 00102 / Lb 14).